Reading from the N-terminus, the 466-residue chain is Ribulose bisphosphate carboxylase large chain (466 aa).

At K5 the chain carries N6,N6,N6-trimethyllysine. Substrate-binding residues include N114 and T164. K166 serves as the catalytic Proton acceptor. K168 contacts substrate. Mg(2+)-binding residues include K192, D194, and E195. The residue at position 192 (K192) is an N6-carboxylysine. Residue H285 is the Proton acceptor of the active site. Substrate contacts are provided by R286, H318, and S370.

This sequence belongs to the RuBisCO large chain family. Type I subfamily. As to quaternary structure, heterohexadecamer of 8 large chains and 8 small chains; disulfide-linked. The disulfide link is formed within the large subunit homodimers. Mg(2+) is required as a cofactor. The disulfide bond which can form in the large chain dimeric partners within the hexadecamer appears to be associated with oxidative stress and protein turnover.

It is found in the plastid. The protein resides in the chloroplast. The catalysed reaction is 2 (2R)-3-phosphoglycerate + 2 H(+) = D-ribulose 1,5-bisphosphate + CO2 + H2O. It catalyses the reaction D-ribulose 1,5-bisphosphate + O2 = 2-phosphoglycolate + (2R)-3-phosphoglycerate + 2 H(+). In terms of biological role, ruBisCO catalyzes two reactions: the carboxylation of D-ribulose 1,5-bisphosphate, the primary event in carbon dioxide fixation, as well as the oxidative fragmentation of the pentose substrate in the photorespiration process. Both reactions occur simultaneously and in competition at the same active site. The protein is Ribulose bisphosphate carboxylase large chain of Drosera binata (Fork-leaved sundew).